An 85-amino-acid polypeptide reads, in one-letter code: Alpha-mammal toxin AaH2 (85 aa).

Positions 1-19 (MNYLVMISLALLFVTGVES) are cleaved as a signal peptide. The LCN-type CS-alpha/beta domain maps to 21-83 (KDGYIVDDVN…VRTKGPGRCH (63 aa)). Intrachain disulfides connect Cys31–Cys82, Cys35–Cys55, Cys41–Cys65, and Cys45–Cys67. His83 carries the histidine amide modification.

This sequence belongs to the long (4 C-C) scorpion toxin superfamily. Sodium channel inhibitor family. Alpha subfamily. The amidation of His-83 is not necessary for toxicity. Expressed by the venom gland.

It localises to the secreted. Alpha toxin that binds voltage-independently at site-3 of sodium channels (Nav), inhibits the inactivation of the activated channels, and weakly inhibits activation, thereby blocking neuronal transmission. Inserts into voltage-sensing domain IV to stabilize a deactivated state, thereby preventing fast-inactivation. Principally slows the inactivation process of TTX-sensitive sodium channels. It is active on mammalian brain Nav1.2/SCN2A (EC(50)human=0.72 nM, EC(50)rat=2.6 nM), on rat skeletal muscle Nav1.4/SCN4A (EC(50)=2.2 nM), and on human neuronal Nav1.7/SCN9A (EC(50)=6.8-51.7 nM). In vivo, intraplantar injection into mice induces spontaneous pain responses. In Androctonus australis (Sahara scorpion), this protein is Alpha-mammal toxin AaH2.